The sequence spans 247 residues: Carboxy-S-adenosyl-L-methionine synthase (247 aa).

Residues Tyr-40, 65 to 67, 90 to 91, 122 to 123, Asn-137, and Arg-204 contribute to the S-adenosyl-L-methionine site; these read GAS, DN, and DI.

It belongs to the class I-like SAM-binding methyltransferase superfamily. Cx-SAM synthase family. In terms of assembly, homodimer.

It carries out the reaction prephenate + S-adenosyl-L-methionine = carboxy-S-adenosyl-L-methionine + 3-phenylpyruvate + H2O. Catalyzes the conversion of S-adenosyl-L-methionine (SAM) to carboxy-S-adenosyl-L-methionine (Cx-SAM). This is Carboxy-S-adenosyl-L-methionine synthase from Ectopseudomonas mendocina (strain ymp) (Pseudomonas mendocina).